A 325-amino-acid polypeptide reads, in one-letter code: MQVVDEKTILELENERFDESSQFKTPEKLIVEASDMTAFRQSKAYYRIFDFLQRLNIASVGVNDYHVEYSTRVEKLVRILCRVKEITKTVPPASGRHRFGNPAFRIWHEKLRDSASQIMDIIIPDSLSKAKVELLDYFLGSFGNSQRIDFGTGHELNFLGFIKGLDLLGLLDAADYKAIALYITHVYLEVCRELVQTYRLEPAGSHGVWGLDDHFFIPYIFGSAQLADKASSSIIKPDAILNKKIVDEKANSNLYFSAIKFINVMKKGPFYEHSPILYDITAVPIWSKVNQGLIKMYDVEVLSKYPVVQHFHFGNLFPFNPLVAK.

The protein belongs to the PTPA-type PPIase family.

The protein localises to the cytoplasm. Its subcellular location is the nucleus. The catalysed reaction is [protein]-peptidylproline (omega=180) = [protein]-peptidylproline (omega=0). In terms of biological role, PPIases accelerate the folding of proteins. It catalyzes the cis-trans isomerization of proline imidic peptide bonds in oligopeptides. Acts as a regulatory subunit for PP2A-like phosphatases modulating their activity or substrate specificity, probably by inducing a conformational change in the catalytic subunit, a direct target of the PPIase. Can reactivate inactive phosphatase PP2A-phosphatase methylesterase complexes (PP2Ai) in presence of ATP and Mg(2+) by dissociating the inactive form from the complex. The chain is Serine/threonine-protein phosphatase 2A activator 1 (rrd1) from Schizosaccharomyces pombe (strain 972 / ATCC 24843) (Fission yeast).